Consider the following 287-residue polypeptide: Proteasome assembly chaperone 1 (287 aa).

The segment at 1-32 (MATFFGEVQSVFSRAVDEDDEEEEGEEEEEDR) is disordered. A compositionally biased stretch (acidic residues) spans 17-32 (DEDDEEEEGEEEEEDR).

This sequence belongs to the PSMG1 family. Forms a heterodimer with psmg2. Post-translationally, degraded by the proteasome upon completion of 20S proteasome maturation.

It is found in the cytoplasm. It localises to the endoplasmic reticulum. Its function is as follows. Chaperone protein which promotes assembly of the 20S proteasome as part of a heterodimer with psmg2. The polypeptide is Proteasome assembly chaperone 1 (Xenopus tropicalis (Western clawed frog)).